The chain runs to 257 residues: AN1-type zinc finger protein 2B (257 aa).

2 AN1-type zinc fingers span residues 4–52 (PDLG…QKDI) and 94–142 (KIFT…HPTS). Zn(2+) contacts are provided by C10, C15, C25, C28, C33, H36, H42, C44, C100, C105, C115, C118, C123, H126, H132, and C134. The tract at residues 141-151 (TSRAGLAAISR) is VCP/p97-interacting motif (VIM). The disordered stretch occupies residues 153-187 (QAVASTSTVPSPSQTMPSCTSPSRATTRSPSWTAP). Residues 155-171 (VASTSTVPSPSQTMPSC) show a composition bias toward polar residues. Phosphoserine occurs at positions 163 and 173. The span at 172–186 (TSPSRATTRSPSWTA) shows a compositional bias: low complexity. UIM domains are found at residues 197 to 216 (SEDE…TKPQ) and 221 to 240 (QEEE…AEYQ). At C254 the chain carries Cysteine methyl ester. Residue C254 is the site of S-geranylgeranyl cysteine attachment. Residues 254-257 (CSLC) carry the CAAX motif motif. Residues 255–257 (SLC) constitute a propeptide, removed in mature form.

As to quaternary structure, binds 'Lys-48'-linked polyubiquitin chains of ubiquitinated proteins. Associates with the proteasome complex; upon exposure to arsenite. Interacts (via VIM motif) with VCP; the interaction is direct. Interacts with BAG6. Interacts with IGF1R (nascent precursor form). Interacts with DERL1, FAF2, NPLOC4 and UFD1; probably through VCP. Post-translationally, phosphorylated by MAPK14. Phosphorylation has no effect on association with the proteasome complex.

The protein resides in the endoplasmic reticulum membrane. In terms of biological role, plays a role in protein homeostasis by regulating both the translocation and the ubiquitin-mediated proteasomal degradation of nascent proteins at the endoplasmic reticulum. It is involved in the regulation of signal-mediated translocation of proteins into the endoplasmic reticulum. It also plays a role in the ubiquitin-mediated proteasomal degradation of proteins for which signal-mediated translocation to the endoplasmic reticulum has failed. May therefore function in the endoplasmic reticulum stress-induced pre-emptive quality control, a mechanism that selectively attenuates the translocation of newly synthesized proteins into the endoplasmic reticulum and reroutes them to the cytosol for proteasomal degradation. By controlling the steady-state expression of the IGF1R receptor, indirectly regulates the insulin-like growth factor receptor signaling pathway. This Homo sapiens (Human) protein is AN1-type zinc finger protein 2B.